The sequence spans 376 residues: 5-amino-6-(D-ribitylamino)uracil--L-tyrosine 4-hydroxyphenyl transferase 1 (376 aa).

Positions 50–275 (VTYVVNRNIN…PGLEDLKVYA (226 aa)) constitute a Radical SAM core domain. [4Fe-4S] cluster contacts are provided by cysteine 64, cysteine 68, and cysteine 71.

This sequence belongs to the radical SAM superfamily. CofH family. Consists of two subunits, CofG and CofH. [4Fe-4S] cluster is required as a cofactor.

The enzyme catalyses 5-amino-6-(D-ribitylamino)uracil + L-tyrosine + S-adenosyl-L-methionine = 5-amino-5-(4-hydroxybenzyl)-6-(D-ribitylimino)-5,6-dihydrouracil + 2-iminoacetate + 5'-deoxyadenosine + L-methionine + H(+). The protein operates within cofactor biosynthesis; coenzyme F0 biosynthesis. Functionally, catalyzes the radical-mediated synthesis of 5-amino-5-(4-hydroxybenzyl)-6-(D-ribitylimino)-5,6-dihydrouracil from 5-amino-6-(D-ribitylamino)uracil and L-tyrosine. This is 5-amino-6-(D-ribitylamino)uracil--L-tyrosine 4-hydroxyphenyl transferase 1 from Methanosarcina mazei (strain ATCC BAA-159 / DSM 3647 / Goe1 / Go1 / JCM 11833 / OCM 88) (Methanosarcina frisia).